The primary structure comprises 113 residues: Hemerythrin (113 aa).

Residues His-25, His-54, Glu-58, His-73, His-77, His-101, and Asp-106 each contribute to the Fe cation site.

It belongs to the hemerythrin family. As to quaternary structure, homotrimer.

Functionally, hemerythrin is a respiratory protein in blood cells of certain marine worms. The oxygen-binding site in each chain contains two iron atoms. This chain is Hemerythrin, found in Siphonosoma cumanense (Sipunculan worm).